Reading from the N-terminus, the 128-residue chain is Elongation factor G (128 aa).

This sequence belongs to the GTP-binding elongation factor family. EF-G/EF-2 subfamily.

The protein resides in the cytoplasm. In terms of biological role, catalyzes the GTP-dependent ribosomal translocation step during translation elongation. During this step, the ribosome changes from the pre-translocational (PRE) to the post-translocational (POST) state as the newly formed A-site-bound peptidyl-tRNA and P-site-bound deacylated tRNA move to the P and E sites, respectively. Catalyzes the coordinated movement of the two tRNA molecules, the mRNA and conformational changes in the ribosome. The chain is Elongation factor G (fusA) from Planobispora rosea.